Consider the following 159-residue polypeptide: Large ribosomal subunit protein uL11 (159 aa).

Belongs to the universal ribosomal protein uL11 family. In terms of assembly, part of the ribosomal stalk of the 50S ribosomal subunit. Interacts with L10 and the large rRNA to form the base of the stalk. L10 forms an elongated spine to which L12 dimers bind in a sequential fashion forming a multimeric L10(L12)X complex.

Functionally, forms part of the ribosomal stalk which helps the ribosome interact with GTP-bound translation factors. The chain is Large ribosomal subunit protein uL11 from Nitrosopumilus maritimus (strain SCM1).